The primary structure comprises 171 residues: MDNRKMLLRQKLKINKQKSLRVTLMSTLPRDMATTIEDCSLITSPELERILDKVQKKWNFELHKNDFAIKYSEHRKEYSWEYEVINHVQQTKLPDEQVYLYLGIEDSPIFLINGNWIIENFNFLWEQINNSDLWIIDFNFKYGVLVSRYGGYLDHDPNPNEIIYAVTEWGI.

The polypeptide is SPbeta prophage-derived uncharacterized protein YokC (yokC) (Bacillus subtilis (strain 168)).